Here is a 225-residue protein sequence, read N- to C-terminus: Enolase-phosphatase E1 (225 aa).

The protein belongs to the HAD-like hydrolase superfamily. MasA/MtnC family. In terms of assembly, monomer. The cofactor is Mg(2+).

It catalyses the reaction 5-methylsulfanyl-2,3-dioxopentyl phosphate + H2O = 1,2-dihydroxy-5-(methylsulfanyl)pent-1-en-3-one + phosphate. It participates in amino-acid biosynthesis; L-methionine biosynthesis via salvage pathway; L-methionine from S-methyl-5-thio-alpha-D-ribose 1-phosphate: step 3/6. The protein operates within amino-acid biosynthesis; L-methionine biosynthesis via salvage pathway; L-methionine from S-methyl-5-thio-alpha-D-ribose 1-phosphate: step 4/6. In terms of biological role, bifunctional enzyme that catalyzes the enolization of 2,3-diketo-5-methylthiopentyl-1-phosphate (DK-MTP-1-P) into the intermediate 2-hydroxy-3-keto-5-methylthiopentenyl-1-phosphate (HK-MTPenyl-1-P), which is then dephosphorylated to form the acireductone 1,2-dihydroxy-3-keto-5-methylthiopentene (DHK-MTPene). This chain is Enolase-phosphatase E1, found in Shewanella halifaxensis (strain HAW-EB4).